A 403-amino-acid chain; its full sequence is Protein LAZ1 homolog 2 (403 aa).

Transmembrane regions (helical) follow at residues 16-36, 50-70, 162-182, 191-211, 236-256, and 269-289; these read SLII…YSIL, WIVS…ISLS, MILK…GVYG, GYPY…FCLV, IVFA…YGIL, and FLIC…FPAE. A disordered region spans residues 381-403; the sequence is SDGKEETEVTEEVTVETSVPPKE.

The protein belongs to the TMEM184 family.

The protein resides in the membrane. This Arabidopsis thaliana (Mouse-ear cress) protein is Protein LAZ1 homolog 2.